A 172-amino-acid polypeptide reads, in one-letter code: 3-hydroxydecanoyl-[acyl-carrier-protein] dehydratase (172 aa).

The active site involves His71.

Belongs to the thioester dehydratase family. FabA subfamily. As to quaternary structure, homodimer.

The protein resides in the cytoplasm. The catalysed reaction is a (3R)-hydroxyacyl-[ACP] = a (2E)-enoyl-[ACP] + H2O. It catalyses the reaction (3R)-hydroxydecanoyl-[ACP] = (2E)-decenoyl-[ACP] + H2O. The enzyme catalyses (2E)-decenoyl-[ACP] = (3Z)-decenoyl-[ACP]. It participates in lipid metabolism; fatty acid biosynthesis. Necessary for the introduction of cis unsaturation into fatty acids. Catalyzes the dehydration of (3R)-3-hydroxydecanoyl-ACP to E-(2)-decenoyl-ACP and then its isomerization to Z-(3)-decenoyl-ACP. Can catalyze the dehydratase reaction for beta-hydroxyacyl-ACPs with saturated chain lengths up to 16:0, being most active on intermediate chain length. The sequence is that of 3-hydroxydecanoyl-[acyl-carrier-protein] dehydratase from Escherichia coli O139:H28 (strain E24377A / ETEC).